A 62-amino-acid polypeptide reads, in one-letter code: Large ribosomal subunit protein bL28 (62 aa).

Belongs to the bacterial ribosomal protein bL28 family.

The chain is Large ribosomal subunit protein bL28 from Halalkalibacterium halodurans (strain ATCC BAA-125 / DSM 18197 / FERM 7344 / JCM 9153 / C-125) (Bacillus halodurans).